Consider the following 279-residue polypeptide: 3-methyl-2-oxobutanoate hydroxymethyltransferase (279 aa).

Mg(2+)-binding residues include aspartate 53 and aspartate 92. 3-methyl-2-oxobutanoate is bound by residues aspartate 53 to serine 54, aspartate 92, and lysine 122. Position 124 (glutamate 124) interacts with Mg(2+). Catalysis depends on glutamate 191, which acts as the Proton acceptor.

The protein belongs to the PanB family. In terms of assembly, homodecamer; pentamer of dimers. Mg(2+) is required as a cofactor.

It is found in the cytoplasm. It carries out the reaction 3-methyl-2-oxobutanoate + (6R)-5,10-methylene-5,6,7,8-tetrahydrofolate + H2O = 2-dehydropantoate + (6S)-5,6,7,8-tetrahydrofolate. The protein operates within cofactor biosynthesis; (R)-pantothenate biosynthesis; (R)-pantoate from 3-methyl-2-oxobutanoate: step 1/2. Functionally, catalyzes the reversible reaction in which hydroxymethyl group from 5,10-methylenetetrahydrofolate is transferred onto alpha-ketoisovalerate to form ketopantoate. The sequence is that of 3-methyl-2-oxobutanoate hydroxymethyltransferase from Maricaulis maris (strain MCS10) (Caulobacter maris).